A 189-amino-acid polypeptide reads, in one-letter code: Copper transport protein CTR2 (189 aa).

Topologically, residues 1 to 81 (MDDKKTWSTV…VVFEWWHIKT (81 aa)) are cytoplasmic. Residues 82-102 (LPGLILSCLAIFGLAYLYEYL) traverse the membrane as a helical segment. Residues 103–142 (KYCVHKRQLSQRVLLPNRSLTKINQADKVSNSILYGLQVG) are Vacuolar-facing. The chain crosses the membrane as a helical span at residues 143–163 (FSFMLMLVFMTYNGWLMLAVV). The Cytoplasmic segment spans residues 164–189 (CGAIWGNYSWCTSYSPEIDDSSLACH).

Belongs to the copper transporter (Ctr) (TC 1.A.56) family. SLC31A subfamily. Homomultimer.

Its subcellular location is the vacuole membrane. Functionally, provides bioavailable copper via mobilization of vacuolar copper stores and export to the cytoplasm. The polypeptide is Copper transport protein CTR2 (CTR2) (Saccharomyces cerevisiae (strain ATCC 204508 / S288c) (Baker's yeast)).